Consider the following 423-residue polypeptide: Type II methyltransferase M.BamHI (423 aa).

Residues 397–414 (DFRQDHEGNSKGDKKNEN) are compositionally biased toward basic and acidic residues. The segment at 397 to 423 (DFRQDHEGNSKGDKKNENNDQISLSLE) is disordered.

Belongs to the N(4)/N(6)-methyltransferase family.

It carries out the reaction a 2'-deoxycytidine in DNA + S-adenosyl-L-methionine = an N(4)-methyl-2'-deoxycytidine in DNA + S-adenosyl-L-homocysteine + H(+). In terms of biological role, a beta subtype methylase, recognizes the double-stranded sequence 5'-GGATCC-3', methylates C-5 on both strands, and protects the DNA from cleavage by the BamHI endonuclease. The chain is Type II methyltransferase M.BamHI from Bacillus amyloliquefaciens (Bacillus velezensis).